The primary structure comprises 321 residues: uncharacterized protein (321 aa).

One can recognise an HTH lysR-type domain in the interval Met1 to Thr58. The H-T-H motif DNA-binding region spans Val18–Ala37.

The protein belongs to the LysR transcriptional regulatory family.

This is an uncharacterized protein from Mycobacterium tuberculosis (strain CDC 1551 / Oshkosh).